Here is a 266-residue protein sequence, read N- to C-terminus: Tryptophan synthase alpha chain (266 aa).

Active-site proton acceptor residues include Glu45 and Asp56.

This sequence belongs to the TrpA family. As to quaternary structure, tetramer of two alpha and two beta chains.

The catalysed reaction is (1S,2R)-1-C-(indol-3-yl)glycerol 3-phosphate + L-serine = D-glyceraldehyde 3-phosphate + L-tryptophan + H2O. Its pathway is amino-acid biosynthesis; L-tryptophan biosynthesis; L-tryptophan from chorismate: step 5/5. The alpha subunit is responsible for the aldol cleavage of indoleglycerol phosphate to indole and glyceraldehyde 3-phosphate. The protein is Tryptophan synthase alpha chain of Novosphingobium aromaticivorans (strain ATCC 700278 / DSM 12444 / CCUG 56034 / CIP 105152 / NBRC 16084 / F199).